Here is a 302-residue protein sequence, read N- to C-terminus: Nucleotide-binding protein STH186 (302 aa).

Residue 15–22 participates in ATP binding; it reads GMSGAGKT. 66–69 is a GTP binding site; it reads DIRG.

Belongs to the RapZ-like family.

Functionally, displays ATPase and GTPase activities. The chain is Nucleotide-binding protein STH186 from Symbiobacterium thermophilum (strain DSM 24528 / JCM 14929 / IAM 14863 / T).